A 319-amino-acid polypeptide reads, in one-letter code: MSINFIDFEQPIADIEAKIESLTSISSIDKTCDTNFNEEIKRLRDKSIELTRKIFAHLSAWQIAQLARHPCRPYMLDYVQYIFTDFDELAGDRAYADDKAIVGGLARINSRPVMIIGHQKGREIKEKIRRNFGMPAPEGYRKALRLMKMADRFSIPILTFIDTPGAYPGIGAEERGQSEAIATNLREMAYLRVPIVSTIIGEGGSGGALAIGVGDKVNMLKYSTYSVISPEGCASILWKSVDKAPLAAEAMGINAARLKKLKLIDSIIPEPLGGAHRDVAIMAASLKKQLLFDLSELDRMNEQELLDRRYNRIMKYGYC.

Positions 43-296 constitute a CoA carboxyltransferase C-terminal domain; sequence LRDKSIELTR…KKQLLFDLSE (254 aa).

This sequence belongs to the AccA family. As to quaternary structure, acetyl-CoA carboxylase is a heterohexamer composed of biotin carboxyl carrier protein (AccB), biotin carboxylase (AccC) and two subunits each of ACCase subunit alpha (AccA) and ACCase subunit beta (AccD).

The protein localises to the cytoplasm. The catalysed reaction is N(6)-carboxybiotinyl-L-lysyl-[protein] + acetyl-CoA = N(6)-biotinyl-L-lysyl-[protein] + malonyl-CoA. Its pathway is lipid metabolism; malonyl-CoA biosynthesis; malonyl-CoA from acetyl-CoA: step 1/1. In terms of biological role, component of the acetyl coenzyme A carboxylase (ACC) complex. First, biotin carboxylase catalyzes the carboxylation of biotin on its carrier protein (BCCP) and then the CO(2) group is transferred by the carboxyltransferase to acetyl-CoA to form malonyl-CoA. In Baumannia cicadellinicola subsp. Homalodisca coagulata, this protein is Acetyl-coenzyme A carboxylase carboxyl transferase subunit alpha.